Here is a 285-residue protein sequence, read N- to C-terminus: Bifunctional protein FolD (285 aa).

NADP(+) is bound by residues 164–166 (GRS), Ser-189, and Ile-230.

Belongs to the tetrahydrofolate dehydrogenase/cyclohydrolase family. As to quaternary structure, homodimer.

It carries out the reaction (6R)-5,10-methylene-5,6,7,8-tetrahydrofolate + NADP(+) = (6R)-5,10-methenyltetrahydrofolate + NADPH. The enzyme catalyses (6R)-5,10-methenyltetrahydrofolate + H2O = (6R)-10-formyltetrahydrofolate + H(+). It functions in the pathway one-carbon metabolism; tetrahydrofolate interconversion. Functionally, catalyzes the oxidation of 5,10-methylenetetrahydrofolate to 5,10-methenyltetrahydrofolate and then the hydrolysis of 5,10-methenyltetrahydrofolate to 10-formyltetrahydrofolate. In Oceanobacillus iheyensis (strain DSM 14371 / CIP 107618 / JCM 11309 / KCTC 3954 / HTE831), this protein is Bifunctional protein FolD.